The sequence spans 249 residues: MLIEEIEFYNVNGKKTTTVVPENTKIKKRVLNDRRTLYVGNLPKNCRKQDLRDLFEPNYGKITINMLKKKPLKKPLKRFAFIEFQEGVNLKKVKEKMNGKIFMNEKIVIENILTKEEKSFEKNQKSNKKTAPDLKPLSTNTLYVKNIPMKSTNEDLAKIFGVDPKNINFVRRELVDLRTNKVFFSDEFHTGEAFIKFDNLGTGDSIQKKCREFKGRKASNGRVLLVKIASAKKNEQKQEGGDNTKIKQN.

2 RRM domains span residues 35–114 (RTLY…NILT) and 140–231 (NTLY…IASA).

The sequence is that of Ribonucleoprotein 1 (RNP1) from Saccharomyces cerevisiae (strain ATCC 204508 / S288c) (Baker's yeast).